The chain runs to 634 residues: Alpha-L-iduronidase (634 aa).

The N-terminal stretch at 1 to 16 is a signal peptide; that stretch reads MLTFFAAFLAAPLALA. 3 residues coordinate alpha-D-mannopyranose: Pro-44, Leu-46, and His-48. His-81 serves as a coordination point for alpha-L-iduronate. Residue Asn-100 is glycosylated (N-linked (GlcNAc...) asparagine). Positions 171 and 172 each coordinate alpha-L-iduronate. Residue Glu-172 is the Proton donor of the active site. Asn-180 and Asn-233 each carry an N-linked (GlcNAc...) asparagine glycan. 3 residues coordinate alpha-L-iduronate: Lys-254, Glu-289, and Gly-295. Glu-289 serves as the catalytic Nucleophile. Trp-296 contacts alpha-D-mannopyranose. A glycan (N-linked (GlcNAc...) asparagine) is linked at Asn-326. The alpha-L-iduronate site is built by Asp-339 and Arg-353. 3 N-linked (GlcNAc...) asparagine glycosylation sites follow: Asn-362, Asn-405, and Asn-441. A disulfide bridge connects residues Cys-531 and Cys-567.

Belongs to the glycosyl hydrolase 39 family. As to quaternary structure, monomer. In terms of processing, N-glycosylation contributes to substrate binding and is required for full enzymatic activity. In terms of tissue distribution, ubiquitous.

It is found in the lysosome. It catalyses the reaction Hydrolysis of unsulfated alpha-L-iduronosidic linkages in dermatan sulfate.. This chain is Alpha-L-iduronidase (Idua), found in Mus musculus (Mouse).